Consider the following 268-residue polypeptide: tRNA pseudouridine synthase A (268 aa).

D52 serves as the catalytic Nucleophile. Residue Y110 coordinates substrate.

It belongs to the tRNA pseudouridine synthase TruA family. In terms of assembly, homodimer.

It catalyses the reaction uridine(38/39/40) in tRNA = pseudouridine(38/39/40) in tRNA. Its function is as follows. Formation of pseudouridine at positions 38, 39 and 40 in the anticodon stem and loop of transfer RNAs. The sequence is that of tRNA pseudouridine synthase A from Prochlorococcus marinus (strain MIT 9515).